We begin with the raw amino-acid sequence, 125 residues long: Fluoride-specific ion channel FluC (125 aa).

4 helical membrane-spanning segments follow: residues 1-21 (MIQA…RYFV), 32-52 (AFPW…GVFA), 68-88 (LLIT…LDAI), and 101-121 (IYIA…LAIM). Positions 75 and 78 each coordinate Na(+).

This sequence belongs to the fluoride channel Fluc/FEX (TC 1.A.43) family.

The protein localises to the cell inner membrane. It catalyses the reaction fluoride(in) = fluoride(out). Na(+) is not transported, but it plays an essential structural role and its presence is essential for fluoride channel function. Fluoride-specific ion channel. Important for reducing fluoride concentration in the cell, thus reducing its toxicity. The protein is Fluoride-specific ion channel FluC of Rhizobium etli (strain ATCC 51251 / DSM 11541 / JCM 21823 / NBRC 15573 / CFN 42).